The primary structure comprises 317 residues: Ornithine carbamoyltransferase (317 aa).

Carbamoyl phosphate contacts are provided by residues Ser57–Thr60, Gln84, Arg108, and His135–Gln138. L-ornithine contacts are provided by residues Asn166, Asp230, and Ser234–Met235. Carbamoyl phosphate is bound by residues Cys270 to Leu271 and Arg298.

Belongs to the aspartate/ornithine carbamoyltransferase superfamily. OTCase family. As to quaternary structure, homododecamer.

It is found in the cytoplasm. It catalyses the reaction carbamoyl phosphate + L-ornithine = L-citrulline + phosphate + H(+). It participates in amino-acid biosynthesis; L-arginine biosynthesis; L-arginine from L-ornithine and carbamoyl phosphate: step 1/3. In terms of biological role, reversibly catalyzes the transfer of the carbamoyl group from carbamoyl phosphate (CP) to the N(epsilon) atom of ornithine (ORN) to produce L-citrulline. This chain is Ornithine carbamoyltransferase, found in Pyrococcus horikoshii (strain ATCC 700860 / DSM 12428 / JCM 9974 / NBRC 100139 / OT-3).